Consider the following 404-residue polypeptide: Protein ORF23 (404 aa).

Belongs to the lymphocryptovirus BTRF1 family. As to quaternary structure, interacts with ORF34.

The protein resides in the host nucleus. The protein localises to the host cytoplasm. Its function is as follows. Plays a role in the expression of late genes. The chain is Protein ORF23 (ORF23) from Homo sapiens (Human).